The primary structure comprises 199 residues: Recombination protein RecR (199 aa).

Residues 58–73 (CSVCYNLSETELCRIC) form a C4-type zinc finger. In terms of domain architecture, Toprim spans 81-176 (TRLCVVEQPR…EITRLARGIT (96 aa)).

It belongs to the RecR family.

May play a role in DNA repair. It seems to be involved in an RecBC-independent recombinational process of DNA repair. It may act with RecF and RecO. In Rhodopirellula baltica (strain DSM 10527 / NCIMB 13988 / SH1), this protein is Recombination protein RecR.